Reading from the N-terminus, the 203-residue chain is Ribosomal RNA small subunit methyltransferase G (203 aa).

S-adenosyl-L-methionine-binding positions include Gly-75, Leu-80, 126–127, and Arg-141; that span reads VE.

Belongs to the methyltransferase superfamily. RNA methyltransferase RsmG family.

It is found in the cytoplasm. The enzyme catalyses guanosine(527) in 16S rRNA + S-adenosyl-L-methionine = N(7)-methylguanosine(527) in 16S rRNA + S-adenosyl-L-homocysteine. Its function is as follows. Specifically methylates the N7 position of guanine in position 527 of 16S rRNA. This Ruthia magnifica subsp. Calyptogena magnifica protein is Ribosomal RNA small subunit methyltransferase G.